A 171-amino-acid chain; its full sequence is Endoribonuclease YbeY (171 aa).

Zn(2+)-binding residues include His126, His130, and His136.

It belongs to the endoribonuclease YbeY family. Requires Zn(2+) as cofactor.

The protein resides in the cytoplasm. Single strand-specific metallo-endoribonuclease involved in late-stage 70S ribosome quality control and in maturation of the 3' terminus of the 16S rRNA. This is Endoribonuclease YbeY from Rhizobium etli (strain ATCC 51251 / DSM 11541 / JCM 21823 / NBRC 15573 / CFN 42).